The sequence spans 136 residues: Small ribosomal subunit protein uS11c (136 aa).

Residues 1 to 22 (MAKAIPKKGSRGRIGSRKSTRK) form a disordered region.

This sequence belongs to the universal ribosomal protein uS11 family. Part of the 30S ribosomal subunit.

It localises to the plastid. It is found in the chloroplast. The sequence is that of Small ribosomal subunit protein uS11c from Lactuca sativa (Garden lettuce).